The sequence spans 270 residues: Bis(5'-nucleosyl)-tetraphosphatase, symmetrical (270 aa).

It belongs to the Ap4A hydrolase family.

The enzyme catalyses P(1),P(4)-bis(5'-adenosyl) tetraphosphate + H2O = 2 ADP + 2 H(+). Functionally, hydrolyzes diadenosine 5',5'''-P1,P4-tetraphosphate to yield ADP. This chain is Bis(5'-nucleosyl)-tetraphosphatase, symmetrical, found in Actinobacillus pleuropneumoniae serotype 5b (strain L20).